Here is a 114-residue protein sequence, read N- to C-terminus: Small ribosomal subunit protein bS16 (114 aa).

Residues 87 to 114 are disordered; sequence AFREQPVQSAPKKKAQERAAERAKAAEA. Residues 100–114 show a composition bias toward basic and acidic residues; that stretch reads KAQERAAERAKAAEA.

It belongs to the bacterial ribosomal protein bS16 family.

The sequence is that of Small ribosomal subunit protein bS16 from Acidiphilium cryptum (strain JF-5).